Consider the following 118-residue polypeptide: D-dopachrome decarboxylase-B (118 aa).

P2 bears the N-acetylproline mark.

The protein belongs to the MIF family. Homotrimer.

It localises to the cytoplasm. The catalysed reaction is D-dopachrome + H(+) = 5,6-dihydroxyindole + CO2. Functionally, tautomerization of D-dopachrome with decarboxylation to give 5,6-dihydroxyindole (DHI). This chain is D-dopachrome decarboxylase-B (ddt-b), found in Xenopus laevis (African clawed frog).